The sequence spans 433 residues: tRNA modification GTPase MnmE (433 aa).

Arginine 24, glutamate 86, and lysine 125 together coordinate (6S)-5-formyl-5,6,7,8-tetrahydrofolate. In terms of domain architecture, TrmE-type G spans 218–363; it reads GARLALIGAP…LKEALREALL (146 aa). K(+) is bound at residue asparagine 228. GTP contacts are provided by residues 228–233, 247–253, and 272–275; these read NAGKSS, SPIPGTT, and DTAG. Position 232 (serine 232) interacts with Mg(2+). K(+) is bound by residues serine 247, isoleucine 249, and threonine 252. Residue threonine 253 participates in Mg(2+) binding. Lysine 433 contributes to the (6S)-5-formyl-5,6,7,8-tetrahydrofolate binding site.

Belongs to the TRAFAC class TrmE-Era-EngA-EngB-Septin-like GTPase superfamily. TrmE GTPase family. In terms of assembly, homodimer. Heterotetramer of two MnmE and two MnmG subunits. K(+) is required as a cofactor.

It is found in the cytoplasm. In terms of biological role, exhibits a very high intrinsic GTPase hydrolysis rate. Involved in the addition of a carboxymethylaminomethyl (cmnm) group at the wobble position (U34) of certain tRNAs, forming tRNA-cmnm(5)s(2)U34. The sequence is that of tRNA modification GTPase MnmE from Thermus thermophilus (strain ATCC BAA-163 / DSM 7039 / HB27).